The following is a 138-amino-acid chain: Small ribosomal subunit protein uS11c (138 aa).

A disordered region spans residues 1–23 (MAKPIPRIGSRRNGRISSRKSTR). A compositionally biased stretch (basic residues) spans 9–23 (GSRRNGRISSRKSTR).

The protein belongs to the universal ribosomal protein uS11 family. As to quaternary structure, part of the 30S ribosomal subunit.

The protein resides in the plastid. The protein localises to the chloroplast. The protein is Small ribosomal subunit protein uS11c of Cucumis sativus (Cucumber).